Here is a 535-residue protein sequence, read N- to C-terminus: MTDQTTRLPVRRALISVSDKTGVVDFARELAALGVEILSTGGTFKLLREHGVDAVEVADYTGFPEMMDGRVKTLHPKIHGGILGRRDLDAAVMAEHGIQPIDLVAVNLYPFAATVARPGCTLAEAIENIDIGGPTMVRSAAKNHKDVAIVVNAADYAGVLESLKNGGLTYAQRFDLALRAFEHTAAYDGMIANYLGTIDQGAETLTTEGRAAFPRTFNSQFVKAQDMRYGENPHQQAAFYVETSPAEASVATARQLQGKELSYNNVADTDAALECVKSFVKPACVIVKHANPCGVAVVPEDEGGIRKAYDLAYATDSESAFGGIIAFNRELDGATARAIVERQFVEVIIAPSVSAEAREAVAAKANVRLLECGQWPAERADGLDFKRVNGGLLVQSRDIGMIAEADLKVVTRRAPTEREIHDLIFAWKVAKFVKSNAIVYARNRQTIGVGAGQMSRVNSARIAAIKAEHAGLEVAGAVMASDAFFPFRDGIDNAAKAGITAVIQPGGSMRDNEVIAAADEAGMAMVFTGMRHFRH.

The MGS-like domain maps to 6–151 (TRLPVRRALI…KNHKDVAIVV (146 aa)).

It belongs to the PurH family.

The catalysed reaction is (6R)-10-formyltetrahydrofolate + 5-amino-1-(5-phospho-beta-D-ribosyl)imidazole-4-carboxamide = 5-formamido-1-(5-phospho-D-ribosyl)imidazole-4-carboxamide + (6S)-5,6,7,8-tetrahydrofolate. It carries out the reaction IMP + H2O = 5-formamido-1-(5-phospho-D-ribosyl)imidazole-4-carboxamide. It participates in purine metabolism; IMP biosynthesis via de novo pathway; 5-formamido-1-(5-phospho-D-ribosyl)imidazole-4-carboxamide from 5-amino-1-(5-phospho-D-ribosyl)imidazole-4-carboxamide (10-formyl THF route): step 1/1. It functions in the pathway purine metabolism; IMP biosynthesis via de novo pathway; IMP from 5-formamido-1-(5-phospho-D-ribosyl)imidazole-4-carboxamide: step 1/1. This is Bifunctional purine biosynthesis protein PurH from Azotobacter vinelandii (strain DJ / ATCC BAA-1303).